Here is a 229-residue protein sequence, read N- to C-terminus: MSEKENNFPPLPKFIPVKPCFYQNFSDEIPVEHQVLVKRIYRLWMFYCATLGVNLIACLAWWIGGGSGTNFGLAFVWLLLFTPCSYVCWFRPVYKAFRADSSFNFMAFFFIFGAQFVLTVIQAIGFSGWGACGWLSAIGFFQYSPGAAVVMLLPAIMFSVSAAMMAIAIMKVHRIYRGAGGSFQKAQTEWNTGTWRNPPSREAQYNNFSGNSLPEYPTVPSYPGSGQWP.

The Cytoplasmic portion of the chain corresponds to 1 to 39; that stretch reads MSEKENNFPPLPKFIPVKPCFYQNFSDEIPVEHQVLVKR. The next 4 helical transmembrane spans lie at 40 to 60, 61 to 81, 105 to 125, and 149 to 169; these read IYRL…ACLA, WWIG…LLLF, FMAF…QAIG, and VVML…AIAI. At 170 to 229 the chain is on the cytoplasmic side; that stretch reads MKVHRIYRGAGGSFQKAQTEWNTGTWRNPPSREAQYNNFSGNSLPEYPTVPSYPGSGQWP. Residue Thr-194 is modified to Phosphothreonine. The interval 208–229 is disordered; it reads FSGNSLPEYPTVPSYPGSGQWP.

It belongs to the SCAMP family.

Its subcellular location is the membrane. In terms of biological role, probably involved in membrane protein trafficking. The sequence is that of Secretory carrier-associated membrane protein 4 (SCAMP4) from Pongo abelii (Sumatran orangutan).